A 296-amino-acid chain; its full sequence is Trimeric intracellular cation channel type A (296 aa).

The Lumenal segment spans residues 1 to 19 (MELPGALQLGELAAAFASV). Residues 20 to 37 (PVFPLFDAAYFIVSVLYL) traverse the membrane as a helical segment. Over 38–51 (KYEPGAVEMSRKSP) the chain is Cytoplasmic. Residues 52–73 (FASWLCAMLHCFGSYILADLLL) form a helical membrane-spanning segment. Glycine 74 contacts Ca(2+). The Lumenal segment spans residues 74–85 (GESPIHYFSNNS). The chain crosses the membrane as a helical span at residues 86-103 (SVILATAVWYLIFFCPMN). At 104–107 (LFYK) the chain is on the cytoplasmic side. Residues 108 to 126 (CVSFLPVKLIFVAMKEVVR) traverse the membrane as a helical segment. Residues lysine 122 and arginine 126 each coordinate a 1,2-diacyl-sn-glycero-3-phospho-(1D-myo-inositol-4,5-bisphosphate). The Lumenal portion of the chain corresponds to 127–144 (VRKIAAGVHHAHHQYHHG). The helical transmembrane segment at 145–162 (WFIMMATGWVKGSGVALM) threads the bilayer. Over 163 to 183 (SNFEQLLRGVWRPETNEILHM) the chain is Cytoplasmic. The chain crosses the membrane as a helical span at residues 184-201 (SFPTKASLYGTVLFTLQQ). Topologically, residues 202-209 (THWLPVSE) are lumenal. Residues 210–230 (ANLVFFFTMFMIVCKVFMTAT) traverse the membrane as a helical segment. At 231-273 (HSHASPFAPVEGFICPVFFGSVSSGHTSHHNQHGHSHEASYQP) the chain is on the cytoplasmic side. The disordered stretch occupies residues 256–296 (HTSHHNQHGHSHEASYQPPPPVKSKEELNEGTRKRKAKKAE). Basic and acidic residues predominate over residues 278-287 (KSKEELNEGT).

It belongs to the TMEM38 family. Homotrimer; conformation seems to be controled by binding to diacylglycerol (DAG).

It is found in the sarcoplasmic reticulum membrane. The protein resides in the nucleus membrane. It catalyses the reaction K(+)(in) = K(+)(out). Its activity is regulated as follows. Channel activity is activated by a change of voltage within the sarcoplasmic reticulum lumen and blocked by luminal high Ca(2+) levels. In terms of biological role, intracellular monovalent cation channel required for maintenance of rapid intracellular calcium release. Acts as a potassium counter-ion channel that functions in synchronization with calcium release from intracellular stores. Opened by a change of voltage within the sarcoplasmic reticulum lumen. The protein is Trimeric intracellular cation channel type A (TMEM38A) of Gallus gallus (Chicken).